Reading from the N-terminus, the 514-residue chain is uncharacterized protein (514 aa).

It to E.coli YjjI.

This is an uncharacterized protein from Haemophilus influenzae (strain ATCC 51907 / DSM 11121 / KW20 / Rd).